A 202-amino-acid chain; its full sequence is uncharacterized protein (202 aa).

It localises to the mitochondrion. This is an uncharacterized protein from Schizosaccharomyces pombe (strain 972 / ATCC 24843) (Fission yeast).